The sequence spans 436 residues: Adenylosuccinate synthetase (436 aa).

GTP contacts are provided by residues Gly12–Lys18 and Gly40–Thr42. Asp13 (proton acceptor) is an active-site residue. Mg(2+)-binding residues include Asp13 and Gly40. Residues Asp13–Lys16, Asn38–His41, Thr128, Arg142, Gln223, Thr238, and Arg302 contribute to the IMP site. His41 serves as the catalytic Proton donor. A substrate-binding site is contributed by Thr298–Arg304. GTP-binding positions include Arg304, Lys330–Asp332, and Ser412–Gly414.

This sequence belongs to the adenylosuccinate synthetase family. As to quaternary structure, homodimer. Mg(2+) is required as a cofactor.

The protein resides in the cytoplasm. The catalysed reaction is IMP + L-aspartate + GTP = N(6)-(1,2-dicarboxyethyl)-AMP + GDP + phosphate + 2 H(+). It functions in the pathway purine metabolism; AMP biosynthesis via de novo pathway; AMP from IMP: step 1/2. Plays an important role in the de novo pathway of purine nucleotide biosynthesis. Catalyzes the first committed step in the biosynthesis of AMP from IMP. The sequence is that of Adenylosuccinate synthetase from Prochlorococcus marinus subsp. pastoris (strain CCMP1986 / NIES-2087 / MED4).